The chain runs to 1069 residues: Acyl-CoA dehydrogenase family member 10 (1069 aa).

Residue lysine 413 is modified to N6-succinyllysine. Lysine 427 bears the N6-acetyllysine; alternate mark. Lysine 427 bears the N6-succinyllysine; alternate mark. FAD-binding positions include 792–802 (FAMTEPQVASS), serine 828, arginine 943, glutamine 1013, and glutamate 1044. Lysine 1052 is subject to N6-acetyllysine; alternate. Lysine 1052 is modified (N6-succinyllysine; alternate).

This sequence belongs to the acyl-CoA dehydrogenase family. It depends on FAD as a cofactor.

The enzyme catalyses a 2,3-saturated acyl-CoA + A = a 2,3-dehydroacyl-CoA + AH2. Its function is as follows. Acyl-CoA dehydrogenase only active with R- and S-2-methyl-C15-CoA. This Mus musculus (Mouse) protein is Acyl-CoA dehydrogenase family member 10 (Acad10).